Reading from the N-terminus, the 467-residue chain is Methylenetetrahydrofolate--tRNA-(uracil-5-)-methyltransferase TrmFO (467 aa).

11-16 is a binding site for FAD; the sequence is GAGLAG.

This sequence belongs to the MnmG family. TrmFO subfamily. The cofactor is FAD.

The protein resides in the cytoplasm. The catalysed reaction is uridine(54) in tRNA + (6R)-5,10-methylene-5,6,7,8-tetrahydrofolate + NADH + H(+) = 5-methyluridine(54) in tRNA + (6S)-5,6,7,8-tetrahydrofolate + NAD(+). It carries out the reaction uridine(54) in tRNA + (6R)-5,10-methylene-5,6,7,8-tetrahydrofolate + NADPH + H(+) = 5-methyluridine(54) in tRNA + (6S)-5,6,7,8-tetrahydrofolate + NADP(+). In terms of biological role, catalyzes the folate-dependent formation of 5-methyl-uridine at position 54 (M-5-U54) in all tRNAs. The polypeptide is Methylenetetrahydrofolate--tRNA-(uracil-5-)-methyltransferase TrmFO (Prochlorococcus marinus (strain NATL1A)).